A 1733-amino-acid chain; its full sequence is Polyketide synthase Pks13 (1733 aa).

The Carrier 1 domain maps to 17-95 (ELTVPEMRQW…SLATRIIEGE (79 aa)). O-(pantetheine 4'-phosphoryl)serine is present on S55. Positions 116–541 (RVDIAIVGLS…GANAHVVVRE (426 aa)) constitute a Ketosynthase family 3 (KS3) domain. C287 acts as the Acyl-thioester intermediate; for beta-ketoacyl synthase activity in catalysis. Residues H423 and H463 each act as for beta-ketoacyl synthase activity in the active site. The span at 548–560 (VEKEPEPEPEPKA) shows a compositional bias: basic and acidic residues. The disordered stretch occupies residues 548-567 (VEKEPEPEPEPKAAAEPAEA). Residues 713–1034 (VWVLAGFGAQ…MVSTMAQLYV (322 aa)) form an acyltransferase region. S801 functions as the Acyl-ester intermediate; for acyltransferase activity in the catalytic mechanism. One can recognise a Carrier 2 domain in the interval 1232 to 1309 (ETIAERLGLI…KLIEYAVEHR (78 aa)). Position 1266 is an O-(pantetheine 4'-phosphoryl)serine (S1266). The tract at residues 1344–1368 (PVDSEAGVALPSPQNGEQPNPTGPA) is disordered. Residues 1470–1563 (PVFVFHPAGG…RFVGLIDAVR (94 aa)) are thioesterase-like. The active-site For thioesterase-like activity is the S1533.

Post-translationally, 4'-phosphopantetheine is transferred from CoA to specific serines of apo-Pks13 by PptT.

Its pathway is lipid metabolism; mycolic acid biosynthesis. With respect to regulation, the presence of FadD32 is necessary for the transfer of the acyl chain from the AMP carrier onto Pks13. Its function is as follows. Involved in the biosynthesis of mycolic acids. Forms, with FadD32, the initiation module of the mycolic condensation system. Synthesizes, in coupled reaction with FadD32, the biosynthetic precursors of mycolic acids, alpha-alkyl beta-ketoacids, via the condensation of two long chain fatty acid derivatives, a very long meromycoloyl-AMP and a shorter 2-carboxyacyl-CoA. The acyl chain of the acyl-AMP produced by FadD32 is specifically transferred onto the N-terminal ACP domain of Pks13, and then transferred onto the KS domain. The extender unit carboxyacyl-CoA is specifically loaded onto the AT domain, which catalyzes the covalent attachment of the carboxyacyl chain to its active site, and its subsequent transfer onto the P-pant arm of the C-terminal ACP domain. The KS domain catalyzes the condensation between the two loaded fatty acyl chains to produce an alpha-alkyl beta-ketothioester linked to the C-ACP domain. Then, the thioesterase-like domain acts as a transacylase and is responsible for both the release and the transfer of the alpha-alkyl beta-ketoacyl chain onto a polyol acceptor molecule, particularly trehalose, leading to the formation of the trehalose monomycolate precursor. This Mycobacterium tuberculosis (strain ATCC 25618 / H37Rv) protein is Polyketide synthase Pks13.